Here is a 459-residue protein sequence, read N- to C-terminus: tRNA modification GTPase MnmE (459 aa).

The (6S)-5-formyl-5,6,7,8-tetrahydrofolate site is built by arginine 20, glutamate 85, and arginine 124. The 160-residue stretch at 221 to 380 (GLSTVIIGRP…LEMAIQSLFF (160 aa)) folds into the TrmE-type G domain. Position 231 (asparagine 231) interacts with K(+). GTP-binding positions include 231–236 (NVGKSS), 250–256 (TDIPGTT), and 275–278 (DTAG). Residue serine 235 participates in Mg(2+) binding. 3 residues coordinate K(+): threonine 250, isoleucine 252, and threonine 255. Threonine 256 is a Mg(2+) binding site. Lysine 459 is a (6S)-5-formyl-5,6,7,8-tetrahydrofolate binding site.

The protein belongs to the TRAFAC class TrmE-Era-EngA-EngB-Septin-like GTPase superfamily. TrmE GTPase family. Homodimer. Heterotetramer of two MnmE and two MnmG subunits. The cofactor is K(+).

The protein resides in the cytoplasm. Functionally, exhibits a very high intrinsic GTPase hydrolysis rate. Involved in the addition of a carboxymethylaminomethyl (cmnm) group at the wobble position (U34) of certain tRNAs, forming tRNA-cmnm(5)s(2)U34. This Bacillus pumilus (strain SAFR-032) protein is tRNA modification GTPase MnmE.